Here is a 2023-residue protein sequence, read N- to C-terminus: Protein Daple (2023 aa).

Residues asparagine 11–alanine 131 enclose the Calponin-homology (CH) domain. 3 coiled-coil regions span residues arginine 250–glutamate 415, asparagine 458–asparagine 1064, and leucine 1105–phenylalanine 1419. The disordered stretch occupies residues arginine 1013–proline 1035. The span at glutamate 1022–serine 1033 shows a compositional bias: polar residues. 2 disordered regions span residues lysine 1441–serine 1824 and leucine 1837–valine 2023. The span at proline 1442–serine 1460 shows a compositional bias: basic and acidic residues. The span at serine 1478–glutamine 1491 shows a compositional bias: pro residues. Composition is skewed to polar residues over residues aspartate 1497–alanine 1518 and threonine 1564–leucine 1585. Composition is skewed to low complexity over residues serine 1623 to leucine 1643 and arginine 1667 to serine 1704. Residues serine 1700–serine 1728 carry the GBA motif. Polar residues-rich tracts occupy residues glutamine 1714–glycine 1727, threonine 1752–threonine 1763, leucine 1785–proline 1799, and alanine 1809–serine 1824. Positions valine 1890–phenylalanine 1904 are enriched in basic and acidic residues. Low complexity predominate over residues glycine 1927 to glycine 1945. The span at glutamine 1974–aspartate 1988 shows a compositional bias: basic and acidic residues. The segment covering threonine 1989 to glutamine 2014 has biased composition (polar residues). The PDZ-binding motif lies at tyrosine 2020 to valine 2023.

It belongs to the CCDC88 family.

It is found in the cytoplasm. The protein resides in the cell junction. Functionally, positive regulator of Wnt signaling, acting synergistically with dvl2. Functions upstream of ctnnb1/beta-catenin in the canonical Wnt pathway, and also activates jnk in the Wnt/planar cell polarity (PCP) pathway. Acts as a non-receptor guanine nucleotide exchange factor which binds to and activates guanine nucleotide-binding protein G(i) alpha (Gi-alpha) subunits. This promotes apical cell constriction and subsequent bending of the neural plate during neurulation via arhgef18. The sequence is that of Protein Daple from Danio rerio (Zebrafish).